Reading from the N-terminus, the 110-residue chain is Plasma membrane ATPase (110 aa).

Positions 72 and 76 each coordinate Mg(2+). The interval 88–110 is disordered; that stretch reads APESTSLNLPNDKELSEIAEQAK. Basic and acidic residues predominate over residues 98 to 110; the sequence is NDKELSEIAEQAK.

The protein belongs to the cation transport ATPase (P-type) (TC 3.A.3) family. Type IIIA subfamily. Post-translationally, the N-terminus is blocked.

It localises to the cell membrane. The catalysed reaction is ATP + H2O + H(+)(in) = ADP + phosphate + 2 H(+)(out). Its function is as follows. The plasma membrane ATPase of plants and fungi is a hydrogen ion pump. The proton gradient it generates drives the active transport of nutrients by H(+)-symport. The resulting external acidification and/or internal alkinization may mediate growth responses. The sequence is that of Plasma membrane ATPase from Avena sativa (Oat).